A 694-amino-acid polypeptide reads, in one-letter code: ATP-dependent RNA helicase DHX33 (694 aa).

A Helicase ATP-binding domain is found at 78–246 (LKELEANDTV…FNCKGMYLEG (169 aa)). Residue 91 to 98 (SETGSGKT) coordinates ATP. The DEAH box signature appears at 188-191 (DEAH). The Helicase C-terminal domain maps to 270–443 (TLFHIHRTTP…SMVLQLLALD (174 aa)).

It belongs to the DEAD box helicase family. DEAH subfamily.

It localises to the nucleus. The protein resides in the nucleolus. It catalyses the reaction ATP + H2O = ADP + phosphate + H(+). Functionally, part of a translational control module, also containing pths/DDX47 and ais/DDX52, which coordinates germline stem cell differentiation with ribosome biogenesis during oogenesis. This module allows for coregulation of ribosomal proteins and non1/GTPBP4, a p53 repressor, preventing p53 stabilization, cell cycle arrest and loss of stem cell differentiation. The protein is ATP-dependent RNA helicase DHX33 of Drosophila melanogaster (Fruit fly).